Consider the following 770-residue polypeptide: U3 small nucleolar RNA-associated protein 14 homolog A (770 aa).

A compositionally biased stretch (polar residues) spans 1 to 17 (MNANQAAESNLLASNQQ). Positions 1–65 (MNANQAAESN…GKDRQKLADR (65 aa)) are disordered. A phosphoserine mark is found at Ser-30, Ser-32, and Ser-53. Residues 41–68 (ERKHQKLLESISSLNGKDRQKLADRSEA) adopt a coiled-coil conformation. Residues 56–65 (GKDRQKLADR) show a composition bias toward basic and acidic residues. Residues Ser-78 and Ser-82 each carry the phosphoserine modification. Thr-206 carries the phosphothreonine modification. Coiled coils occupy residues 217 to 291 (SLEE…DKAR) and 318 to 348 (LEAR…EEEG). Disordered stretches follow at residues 334-361 (LTQK…LVPD), 392-455 (KDLE…SSQE), and 467-505 (LRTE…RPER). Composition is skewed to acidic residues over residues 343–358 (ESEE…EEPL) and 396–410 (DPAE…ESEE). A phosphoserine mark is found at Ser-406 and Ser-408. The segment covering 411-444 (EKAVVEEETLLKEFEERRSLRQKSELNHMAEPVH) has biased composition (basic and acidic residues). Residue Lys-449 forms a Glycyl lysine isopeptide (Lys-Gly) (interchain with G-Cter in SUMO2) linkage. Ser-453 carries the phosphoserine modification. Residue Ser-567 is modified to Phosphoserine. Arg-588 is subject to Citrulline. Lys-732 is covalently cross-linked (Glycyl lysine isopeptide (Lys-Gly) (interchain with G-Cter in SUMO2)).

Belongs to the UTP14 family. As to quaternary structure, interacts with DHX37. In terms of processing, citrullinated by PADI4.

It localises to the nucleus. The protein resides in the nucleolus. In terms of biological role, may be required for ribosome biogenesis. This chain is U3 small nucleolar RNA-associated protein 14 homolog A (UTP14A), found in Bos taurus (Bovine).